The chain runs to 703 residues: Polyribonucleotide nucleotidyltransferase (703 aa).

Residues aspartate 486 and aspartate 492 each contribute to the Mg(2+) site. The KH domain maps to 553-612 (PKIEIIHINPDKIRDVIGPGGKKINEIIDATGVKLDIEQDGTVFIGSSDASMIEAAKKLI). Positions 622-690 (GQIYMATVKR…KQGRVNASRK (69 aa)) constitute an S1 motif domain.

This sequence belongs to the polyribonucleotide nucleotidyltransferase family. Requires Mg(2+) as cofactor.

The protein localises to the cytoplasm. The catalysed reaction is RNA(n+1) + phosphate = RNA(n) + a ribonucleoside 5'-diphosphate. Its function is as follows. Involved in mRNA degradation. Catalyzes the phosphorolysis of single-stranded polyribonucleotides processively in the 3'- to 5'-direction. This is Polyribonucleotide nucleotidyltransferase from Macrococcus caseolyticus (strain JCSC5402) (Macrococcoides caseolyticum).